Reading from the N-terminus, the 218-residue chain is MGQKVNPVGLRIGVIRDWESKWYAGKDYADFLHEDLKIREYISKRLSDASVSKVEIERAANRVNITIHTAKPGMVIGKGGSEVEALRKALNSLTGKRVHINILEIKRADLDAQLVADNIARQLENRVSFRRAQKQQIQRTMRAGAQGVKTMVSGRLGGADIARSEYYSEGTVPLHTLRADIDYATSEADTTYGKLGVKVWIYRGEVLPTKKKNEEGGK.

Residues 38–106 form the KH type-2 domain; it reads IREYISKRLS…RVHINILEIK (69 aa).

The protein belongs to the universal ribosomal protein uS3 family. As to quaternary structure, part of the 30S ribosomal subunit. Forms a tight complex with proteins S10 and S14.

Functionally, binds the lower part of the 30S subunit head. Binds mRNA in the 70S ribosome, positioning it for translation. The polypeptide is Small ribosomal subunit protein uS3 (Bacillus subtilis (strain 168)).